Here is a 532-residue protein sequence, read N- to C-terminus: MTTEITRPPAPPSRPSESRKPSLPGLLHLVAIAAVLATIVSAWAIDFVPTALIDGSDNIVALLQRMIPPRLDDPARIGMLAVETLLMAVLGTTLAAIASVPLAFLAARNTTPHPAVQAVARAVITFCRAMPDLLFAVLFVRALGIGVLPGVLALALHSIGMLGKVFADAIEQTDAGPREAVRSTGVGYFRELLNAVVPQVVPSWIAMFVYRIDINLRMSVVLGFVGAGGIGFALQDALRGLIYPRALGIVCVILVIIAGMELLAIAIRRILLDPSRSNPLRDRIARFGLSGVLVGSCVAAFVLLKINPLALFTWVFPSVGIFTRMVPPNFDALGVDLFTAAAQTVAIGVVATAIGIALSIPAGILAARNVSPHPALYWPARAWILVVRAVPELILAVVFVAALGLGPIAGTCALAIGSIGFLAKLVADAVEEIDPGPMEAVRSVGGGWWKTLFAAVLPQSMPALVGSSLYLFDVNVRTSTILGIVGAGGVGYLLFESIRTLNFDVAGAIVIVIFVIVYAIERLSGWIRSRLV.

Residues 1–20 (MTTEITRPPAPPSRPSESRK) form a disordered region. 12 helical membrane-spanning segments follow: residues 23–45 (LPGLLHLVAIAAVLATIVSAWAI), 85–107 (LLMAVLGTTLAAIASVPLAFLAA), 134–156 (LFAVLFVRALGIGVLPGVLALAL), 187–209 (GYFRELLNAVVPQVVPSWIAMFV), 216–235 (LRMSVVLGFVGAGGIGFALQ), 245–267 (RALGIVCVILVIIAGMELLAIAI), 287–304 (FGLSGVLVGSCVAAFVLL), 345–367 (VAIGVVATAIGIALSIPAGILAA), 395–417 (LAVVFVAALGLGPIAGTCALAIG), 452–471 (LFAAVLPQSMPALVGSSLYL), 478–495 (TSTILGIVGAGGVGYLLF), and 505–527 (VAGAIVIVIFVIVYAIERLSGWI). In terms of domain architecture, ABC transmembrane type-1 1 spans 81–264 (AVETLLMAVL…VIIAGMELLA (184 aa)). In terms of domain architecture, ABC transmembrane type-1 2 spans 341 to 524 (AAQTVAIGVV…VIVYAIERLS (184 aa)).

This sequence belongs to the binding-protein-dependent transport system permease family. In terms of assembly, the complex is composed of two ATP-binding proteins (PhnC), two transmembrane proteins (PhnE) and a solute-binding protein (PhnD).

It is found in the cell membrane. Part of the ABC transporter complex PhnCDE involved in phosphate import. Responsible for the translocation of the substrate across the membrane. The sequence is that of Phosphate-import permease protein PhnE (phnE) from Mycolicibacterium smegmatis (strain ATCC 700084 / mc(2)155) (Mycobacterium smegmatis).